We begin with the raw amino-acid sequence, 723 residues long: Peroxisomal bifunctional enzyme (723 aa).

Residues 1-282 (MAEYTRLHNA…FAERKANKWS (282 aa)) form an enoyl-CoA hydratase / isomerase region. N6-succinyllysine is present on Lys38. Residue Gly101 coordinates substrate. Lys165 bears the N6-acetyllysine; alternate mark. An N6-succinyllysine; alternate modification is found at Lys165. Lys171 bears the N6-acetyllysine mark. Lys219 carries the post-translational modification N6-acetyllysine; alternate. Position 219 is an N6-succinyllysine; alternate (Lys219). N6-acetyllysine is present on Lys250. N6-succinyllysine occurs at positions 280 and 290. The 3-hydroxyacyl-CoA dehydrogenase stretch occupies residues 283-572 (TPSGASWKTA…DVLCELGRFG (290 aa)). An N6-acetyllysine mark is found at Lys346, Lys350, and Lys464. Lys532 bears the N6-succinyllysine mark. At Thr548 the chain carries Phosphothreonine. Lys577 carries the post-translational modification N6-succinyllysine. N6-acetyllysine; alternate is present on residues Lys584, Lys591, and Lys710. N6-succinyllysine; alternate occurs at positions 584, 591, and 710. Ser718 is subject to Phosphoserine. The short motif at 721 to 723 (SKL) is the Microbody targeting signal element. Residue Lys722 is modified to N6-succinyllysine.

It in the N-terminal section; belongs to the enoyl-CoA hydratase/isomerase family. In the C-terminal section; belongs to the 3-hydroxyacyl-CoA dehydrogenase family. Monomer. In terms of processing, acetylated, leading to enhanced enzyme activity. Acetylation is enhanced by up to 80% after treatment either with trichostin A (TSA) or with nicotinamide (NAM) with highest increase on Lys-346. Acetylation and enzyme activity increased by about 1.5% on addition of fatty acids. In terms of tissue distribution, liver and kidney. Strongly expressed in the terminal segments of the proximal tubule. Lower amounts seen in the brain.

It is found in the peroxisome. It catalyses the reaction a (3S)-3-hydroxyacyl-CoA = a (2E)-enoyl-CoA + H2O. The catalysed reaction is a 4-saturated-(3S)-3-hydroxyacyl-CoA = a (3E)-enoyl-CoA + H2O. The enzyme catalyses a (3Z)-enoyl-CoA = a 4-saturated (2E)-enoyl-CoA. It carries out the reaction a (3E)-enoyl-CoA = a 4-saturated (2E)-enoyl-CoA. It catalyses the reaction a (3S)-3-hydroxyacyl-CoA + NAD(+) = a 3-oxoacyl-CoA + NADH + H(+). The catalysed reaction is (2S,3S)-3-hydroxy-2-methylbutanoyl-CoA = (2E)-2-methylbut-2-enoyl-CoA + H2O. The enzyme catalyses (3S)-hydroxyhexadecanoyl-CoA + NAD(+) = 3-oxohexadecanoyl-CoA + NADH + H(+). It carries out the reaction (3S)-hydroxyhexadecanoyl-CoA = (2E)-hexadecenoyl-CoA + H2O. It catalyses the reaction (2E)-hexadecenedioyl-CoA + H2O = (3S)-hydroxyhexadecanedioyl-CoA. The catalysed reaction is (3S)-hydroxyhexadecanedioyl-CoA + NAD(+) = 3-oxohexadecanedioyl-CoA + NADH + H(+). The enzyme catalyses (3E,5Z)-tetradecadienoyl-CoA = (2E,5Z)-tetradecadienoyl-CoA. It carries out the reaction (3E,5Z)-octadienoyl-CoA = (2E,5Z)-octadienoyl-CoA. It catalyses the reaction (3S)-hydroxydecanoyl-CoA + NAD(+) = 3-oxodecanoyl-CoA + NADH + H(+). The catalysed reaction is (3E)-decenoyl-CoA = (2E)-decenoyl-CoA. The enzyme catalyses (3Z)-hexenoyl-CoA = (2E)-hexenoyl-CoA. It carries out the reaction (3E)-hexenoyl-CoA = (2E)-hexenoyl-CoA. It catalyses the reaction (3S)-hydroxydecanoyl-CoA = (2E)-decenoyl-CoA + H2O. The catalysed reaction is (3S)-hydroxyhexanoyl-CoA = (2E)-hexenoyl-CoA + H2O. It participates in lipid metabolism; fatty acid beta-oxidation. Enzyme activity enhanced by acetylation. In terms of biological role, peroxisomal trifunctional enzyme possessing 2-enoyl-CoA hydratase, 3-hydroxyacyl-CoA dehydrogenase, and delta 3, delta 2-enoyl-CoA isomerase activities. Catalyzes two of the four reactions of the long chain fatty acids peroxisomal beta-oxidation pathway. Can also use branched-chain fatty acids such as 2-methyl-2E-butenoyl-CoA as a substrate, which is hydrated into (2S,3S)-3-hydroxy-2-methylbutanoyl-CoA. Optimal isomerase for 2,5 double bonds into 3,5 form isomerization in a range of enoyl-CoA species. Also able to isomerize both 3-cis and 3-trans double bonds into the 2-trans form in a range of enoyl-CoA species. With HSD17B4, catalyzes the hydration of trans-2-enoyl-CoA and the dehydrogenation of 3-hydroxyacyl-CoA, but with opposite chiral specificity. Regulates the amount of medium-chain dicarboxylic fatty acids which are essential regulators of all fatty acid oxidation pathways. Also involved in the degradation of long-chain dicarboxylic acids through peroxisomal beta-oxidation. The polypeptide is Peroxisomal bifunctional enzyme (Homo sapiens (Human)).